Consider the following 173-residue polypeptide: Large ribosomal subunit protein bL9 (173 aa).

The disordered stretch occupies residues 150–173; that stretch reads KQEDKKSLSKKLNKADEQGERAEV.

It belongs to the bacterial ribosomal protein bL9 family.

Its function is as follows. Binds to the 23S rRNA. The protein is Large ribosomal subunit protein bL9 of Borreliella burgdorferi (strain ZS7) (Borrelia burgdorferi).